Consider the following 37-residue polypeptide: Large ribosomal subunit protein bL36 (37 aa).

The protein belongs to the bacterial ribosomal protein bL36 family.

The polypeptide is Large ribosomal subunit protein bL36 (Shewanella frigidimarina (strain NCIMB 400)).